The following is a 1015-amino-acid chain: Putative helicase mov-10-B.2 (1015 aa).

The tract at residues 94 to 130 is disordered; the sequence is QWFRPRRRQQNQANATPGNVSSVTPSSDQGPSCPESG. The segment covering 109–123 has biased composition (polar residues); it reads TPGNVSSVTPSSDQG. ATP is bound at residue 555 to 562; that stretch reads GPPGTGKT. The DEAG box signature appears at 677–680; sequence DEAG.

The protein belongs to the DNA2/NAM7 helicase family. SDE3 subfamily.

The protein localises to the cytoplasm. It localises to the P-body. The enzyme catalyses ATP + H2O = ADP + phosphate + H(+). Its function is as follows. Probable RNA helicase. Required for RNA-mediated gene silencing by the RNA-induced silencing complex (RISC). Required for both miRNA-mediated translational repression and miRNA-mediated cleavage of complementary mRNAs by RISC. The chain is Putative helicase mov-10-B.2 (mov10b.2) from Danio rerio (Zebrafish).